The following is a 279-amino-acid chain: Calcium-activated potassium channel subunit beta-3 (279 aa).

The Cytoplasmic segment spans residues 1-60 (MDFSPSSELGFHFVAFILLTRHRTAFPASGKKRETDYSDGDPLDVHKRLPSSAGEDRAVM). Residues 61–81 (LGFAMMGFSVLMFFLLGTTIL) traverse the membrane as a helical segment. The Extracellular portion of the chain corresponds to 82-207 (KPFMLSIQRE…DVILIKKYDQ (126 aa)). Asn131 carries an N-linked (GlcNAc...) asparagine glycan. The helical transmembrane segment at 208-228 (MAIFHCLFWPSLTLLGGALIV) threads the bilayer. The Cytoplasmic portion of the chain corresponds to 229–279 (GMVRLTQHLSLLCEKYSTVVRDEVGGKVPYIEQHQFKLCIMRRSKGRAEKS).

The protein belongs to the KCNMB (TC 8.A.14.1) family. KCNMB3 subfamily. Interacts with KCNMA1 tetramer. There are probably 4 molecules of KCMNB3 per KCNMA1 tetramer. In terms of processing, N-glycosylated. The extracellular domain contains disulfide bond essential for the gating mechanism. Isoform 1, isoform 3 and isoform 4 are widely expressed. Isoform 2 is expressed placenta, pancreas, kidney and heart. Isoform 1 and isoform 3 are highly expressed in pancreas and testis.

It is found in the membrane. Regulatory subunit of the calcium activated potassium KCNMA1 (maxiK) channel. Modulates the calcium sensitivity and gating kinetics of KCNMA1, thereby contributing to KCNMA1 channel diversity. Alters the functional properties of the current expressed by the KCNMA1 channel. Isoform 2, isoform 3 and isoform 4 partially inactivate the current of KCNBMA. Isoform 4 induces a fast and incomplete inactivation of KCNMA1 channel that is detectable only at large depolarizations. In contrast, isoform 1 does not induce detectable inactivation of KCNMA1. Two or more subunits of KCNMB3 are required to block the KCNMA1 tetramer. This Homo sapiens (Human) protein is Calcium-activated potassium channel subunit beta-3 (KCNMB3).